Reading from the N-terminus, the 206-residue chain is Thymidylate kinase (206 aa).

11 to 18 (GIDGAGKT) is a binding site for ATP.

Belongs to the thymidylate kinase family.

The enzyme catalyses dTMP + ATP = dTDP + ADP. Phosphorylation of dTMP to form dTDP in both de novo and salvage pathways of dTTP synthesis. In Burkholderia mallei (strain NCTC 10247), this protein is Thymidylate kinase.